The chain runs to 555 residues: Luciferin 2-monooxygenase (555 aa).

The N-terminal stretch at 1-11 is a signal peptide; that stretch reads MKIIILSVILA. 2 VWFD domains span residues 80–266 and 319–494; these read IECR…EYCK and GTCV…RLCN. 4 cysteine pairs are disulfide-bonded: Cys-82-Cys-222, Cys-321-Cys-454, Cys-343-Cys-493, and Cys-352-Cys-451. N-linked (GlcNAc...) asparagine glycosylation is found at Asn-186 and Asn-408.

In terms of processing, the cysteine residues presumably exist in intramolecular disulfide bridges. The N-terminus is blocked.

It carries out the reaction Cypridina luciferin + O2 = oxidized Cypridina luciferin + hnu + CO2. The chain is Luciferin 2-monooxygenase from Vargula hilgendorfii (Sea firefly).